A 77-amino-acid polypeptide reads, in one-letter code: Acyl carrier protein (77 aa).

The Carrier domain occupies 2–77; the sequence is SNIEERVKKI…AAIDYVSKNQ (76 aa). At Ser-37 the chain carries O-(pantetheine 4'-phosphoryl)serine.

This sequence belongs to the acyl carrier protein (ACP) family. 4'-phosphopantetheine is transferred from CoA to a specific serine of apo-ACP by AcpS. This modification is essential for activity because fatty acids are bound in thioester linkage to the sulfhydryl of the prosthetic group.

The protein localises to the cytoplasm. The protein operates within lipid metabolism; fatty acid biosynthesis. Its function is as follows. Carrier of the growing fatty acid chain in fatty acid biosynthesis. The sequence is that of Acyl carrier protein from Shewanella denitrificans (strain OS217 / ATCC BAA-1090 / DSM 15013).